The primary structure comprises 376 residues: UDP-N-acetylglucosamine 2-epimerase (376 aa).

Substrate-binding positions include R10, K15, D95, E117, H213, Q271, F276, 290 to 292, E296, and R313; that span reads SGG.

Belongs to the UDP-N-acetylglucosamine 2-epimerase family. As to quaternary structure, homodimer.

It is found in the cytoplasm. It catalyses the reaction UDP-N-acetyl-alpha-D-glucosamine = UDP-N-acetyl-alpha-D-mannosamine. Its pathway is bacterial outer membrane biogenesis; enterobacterial common antigen biosynthesis. Its function is as follows. Catalyzes the reversible epimerization at C-2 of UDP-N-acetylglucosamine (UDP-GlcNAc) and thereby provides bacteria with UDP-N-acetylmannosamine (UDP-ManNAc), the activated donor of ManNAc residues. The protein is UDP-N-acetylglucosamine 2-epimerase of Salmonella typhimurium (strain LT2 / SGSC1412 / ATCC 700720).